Consider the following 472-residue polypeptide: Spliceosome-associated protein CWC27 homolog (472 aa).

Ser-2 is subject to N-acetylserine. A PPIase cyclophilin-type domain is found at 11–166 (TNGKVLLKTT…NPHKIKSCEV (156 aa)). Residues Asn-109 and Asn-201 are each glycosylated (N-linked (GlcNAc...) asparagine). Positions 206–230 (SFGEEAEEEEEEVNRVSQSMKGKSK) form a coiled coil. Disordered regions lie at residues 206-386 (SFGE…DQTL) and 398-472 (QAIA…KERR). The span at 231 to 241 (SSHDLLKDDPH) shows a compositional bias: basic and acidic residues. Residues 257–268 (DLVDDGEDESAE) show a composition bias toward acidic residues. 3 stretches are compositionally biased toward basic and acidic residues: residues 269–286 (HDEY…ERIA), 304–347 (EVEK…KRSE), and 359–371 (EYRR…EALR). Positions 306-377 (EKKSVSRSEE…EALRKQQSKK (72 aa)) form a coiled coil. Position 346 is a phosphoserine (Ser-346). Positions 404-418 (PENDIPETEVEDDEG) are enriched in acidic residues. Basic and acidic residues-rich tracts occupy residues 425 to 437 (QFED…KDAS) and 457 to 472 (RREE…KERR).

This sequence belongs to the cyclophilin-type PPIase family. As to quaternary structure, part of the activated spliceosome B/catalytic step 1 spliceosome, one of the forms of the spliceosome which has a well-formed active site but still cannot catalyze the branching reaction and is composed at least of 52 proteins, the U2, U5 and U6 snRNAs and the pre-mRNA. Recruited during early steps of activated spliceosome B maturation, it is probably one of the first proteins released from this complex as he matures to the spliceosome C complex. Component of the minor spliceosome, which splices U12-type introns.

The protein resides in the nucleus. As part of the spliceosome, plays a role in pre-mRNA splicing. Probable inactive PPIase with no peptidyl-prolyl cis-trans isomerase activity. As a component of the minor spliceosome, involved in the splicing of U12-type introns in pre-mRNAs. In Homo sapiens (Human), this protein is Spliceosome-associated protein CWC27 homolog.